The following is a 106-amino-acid chain: Urease subunit beta (106 aa).

Belongs to the urease beta subunit family. In terms of assembly, heterotrimer of UreA (gamma), UreB (beta) and UreC (alpha) subunits. Three heterotrimers associate to form the active enzyme.

It localises to the cytoplasm. The catalysed reaction is urea + 2 H2O + H(+) = hydrogencarbonate + 2 NH4(+). Its pathway is nitrogen metabolism; urea degradation; CO(2) and NH(3) from urea (urease route): step 1/1. The sequence is that of Urease subunit beta from Prochlorococcus marinus subsp. pastoris (strain CCMP1986 / NIES-2087 / MED4).